Consider the following 361-residue polypeptide: 24-methylenesterol C-methyltransferase 2 (361 aa).

This sequence belongs to the class I-like SAM-binding methyltransferase superfamily. Erg6/SMT family.

The catalysed reaction is 24-methylidenelophenol + S-adenosyl-L-methionine = (Z)-24-ethylidenelophenol + S-adenosyl-L-homocysteine + H(+). It functions in the pathway steroid biosynthesis; sterol biosynthesis. Catalyzes the methyl transfer from S-adenosyl-methionine to the methylene group of 24-methylene lophenol to form 24-ethylidene lophenol. The protein is 24-methylenesterol C-methyltransferase 2 (SMT2) of Arabidopsis thaliana (Mouse-ear cress).